We begin with the raw amino-acid sequence, 164 residues long: Putative 4-hydroxy-4-methyl-2-oxoglutarate aldolase (164 aa).

Substrate is bound by residues 75 to 78 and Arg-97; that span reads GDLI. A divalent metal cation is bound at residue Asp-98.

It belongs to the class II aldolase/RraA-like family. Homotrimer. Requires a divalent metal cation as cofactor.

The enzyme catalyses 4-hydroxy-4-methyl-2-oxoglutarate = 2 pyruvate. It catalyses the reaction oxaloacetate + H(+) = pyruvate + CO2. In terms of biological role, catalyzes the aldol cleavage of 4-hydroxy-4-methyl-2-oxoglutarate (HMG) into 2 molecules of pyruvate. Also contains a secondary oxaloacetate (OAA) decarboxylase activity due to the common pyruvate enolate transition state formed following C-C bond cleavage in the retro-aldol and decarboxylation reactions. The protein is Putative 4-hydroxy-4-methyl-2-oxoglutarate aldolase of Shewanella oneidensis (strain ATCC 700550 / JCM 31522 / CIP 106686 / LMG 19005 / NCIMB 14063 / MR-1).